Consider the following 1043-residue polypeptide: Isoleucine--tRNA ligase (1043 aa).

The short motif at 49 to 59 (PFATGLPHYGH) is the 'HIGH' region element. The short motif at 592 to 596 (KMSKR) is the 'KMSKS' region element. Lys-595 contacts ATP.

The protein belongs to the class-I aminoacyl-tRNA synthetase family. IleS type 2 subfamily. In terms of assembly, monomer. Requires Zn(2+) as cofactor.

It localises to the cytoplasm. The enzyme catalyses tRNA(Ile) + L-isoleucine + ATP = L-isoleucyl-tRNA(Ile) + AMP + diphosphate. Its function is as follows. Catalyzes the attachment of isoleucine to tRNA(Ile). As IleRS can inadvertently accommodate and process structurally similar amino acids such as valine, to avoid such errors it has two additional distinct tRNA(Ile)-dependent editing activities. One activity is designated as 'pretransfer' editing and involves the hydrolysis of activated Val-AMP. The other activity is designated 'posttransfer' editing and involves deacylation of mischarged Val-tRNA(Ile). In Chlamydia abortus (strain DSM 27085 / S26/3) (Chlamydophila abortus), this protein is Isoleucine--tRNA ligase.